Consider the following 809-residue polypeptide: Hydrazine synthase subunit alpha (809 aa).

The N-terminal stretch at 1 to 27 (MGKRKLGVIASAFVAGALVCGSTLVNA) is a signal peptide. Cys303 provides a ligand contact to Zn(2+). Heme contacts are provided by Cys583 and Cys586. His587 lines the Zn(2+) pocket. Heme is bound by residues Tyr591, Cys685, Cys688, His689, and His772. The Cytochrome c domain maps to 633 to 792 (KGVKHGEDVV…AIVEWIDLGA (160 aa)).

As to quaternary structure, part of the hydrazine synthase complex that forms an elongated dimer of heterotrimers composed of one alpha, one beta and one gamma subunit. Requires heme c as cofactor.

Its subcellular location is the anammoxosome. It carries out the reaction hydrazine + 3 Fe(III)-[cytochrome c] + H2O = nitric oxide + 3 Fe(II)-[cytochrome c] + NH4(+) + 2 H(+). The protein operates within nitrogen metabolism. Functionally, component of the hydrazine synthase complex that catalyzes the condensation of nitric oxide (NO) with ammonium to form hydrazine. The alpha subunit catalyzes the second half-reaction, i.e. the condensation of hydroxylamine formed in the active site of the gamma subunit with ammonia, yielding hydrazine. Is involved in anaerobic ammonium oxidation (anammox), a biological process in which nitrite is used as the electron acceptor in the conversion of ammonium to dinitrogen gas (N2) and water; this bacterial process has a major role in the Earth's nitrogen cycle and has been estimated to synthesize up to 50% of the dinitrogen gas emitted into our atmosphere from the oceans. The protein is Hydrazine synthase subunit alpha of Kuenenia stuttgartiensis.